A 438-amino-acid chain; its full sequence is Enolase 1 (438 aa).

Substrate is bound by residues histidine 160 and glutamate 169. The active-site Proton donor is glutamate 212. Residues aspartate 247, glutamate 296, and aspartate 321 each coordinate Mg(2+). Substrate contacts are provided by glutamate 296 and aspartate 321. Lysine 346 (proton acceptor) is an active-site residue. Residues 373 to 376 (SHRS) and lysine 397 each bind substrate.

It belongs to the enolase family. As to quaternary structure, homodimer. Mg(2+) is required as a cofactor.

Its subcellular location is the cytoplasm. The catalysed reaction is (2R)-2-phosphoglycerate = phosphoenolpyruvate + H2O. Its pathway is carbohydrate degradation; glycolysis; pyruvate from D-glyceraldehyde 3-phosphate: step 4/5. This is Enolase 1 (ENO1) from Candida glabrata (strain ATCC 2001 / BCRC 20586 / JCM 3761 / NBRC 0622 / NRRL Y-65 / CBS 138) (Yeast).